Here is a 690-residue protein sequence, read N- to C-terminus: Elongation factor G (690 aa).

The tr-type G domain maps to 8–283 (EKYRNIGIMA…AVVDYLPSPL (276 aa)). GTP-binding positions include 17–24 (AHIDAGKT), 81–85 (DTPGH), and 135–138 (NKLD).

It belongs to the TRAFAC class translation factor GTPase superfamily. Classic translation factor GTPase family. EF-G/EF-2 subfamily.

The protein resides in the cytoplasm. Functionally, catalyzes the GTP-dependent ribosomal translocation step during translation elongation. During this step, the ribosome changes from the pre-translocational (PRE) to the post-translocational (POST) state as the newly formed A-site-bound peptidyl-tRNA and P-site-bound deacylated tRNA move to the P and E sites, respectively. Catalyzes the coordinated movement of the two tRNA molecules, the mRNA and conformational changes in the ribosome. The chain is Elongation factor G from Rhizorhabdus wittichii (strain DSM 6014 / CCUG 31198 / JCM 15750 / NBRC 105917 / EY 4224 / RW1) (Sphingomonas wittichii).